Consider the following 513-residue polypeptide: Histidine--tRNA ligase (513 aa).

The N-terminal 24 residues, 1–24 (MADKAQLQEAIKTQGEVVRKLKSE), are a transit peptide targeting the mitochondrion. The 57-residue stretch at 3 to 59 (DKAQLQEAIKTQGEVVRKLKSEKASKEQIDEEVARLLQLKAQLGGDEGKHVFVLKTA) folds into the WHEP-TRS domain. Residues 130-132 (DLT), Arg-157, Gln-173, Asp-177, Arg-326, and 330-331 (YY) contribute to the L-histidine site.

Belongs to the class-II aminoacyl-tRNA synthetase family.

The protein localises to the cytoplasm. Its subcellular location is the mitochondrion. It carries out the reaction tRNA(His) + L-histidine + ATP = L-histidyl-tRNA(His) + AMP + diphosphate + H(+). In terms of biological role, catalyzes the aminoacylation of histidyl-tRNA. The sequence is that of Histidine--tRNA ligase from Danio rerio (Zebrafish).